The following is a 780-amino-acid chain: Potassium/sodium hyperpolarization-activated cyclic nucleotide-gated channel 3 (780 aa).

Residues 1-47 (MEEEARPAVGDGEAATPARETPPAAPAQARAASGGVPESAPEPKRRQ) are disordered. The Cytoplasmic segment spans residues 1–96 (MEEEARPAVG…PYSDFRFYWD (96 aa)). The segment covering 13–32 (EAATPARETPPAAPAQARAA) has biased composition (low complexity). Residues 45-90 (RRQLGTLLQPTVNKFSLRVFGSHKAVEIEQERVKSAGAWIIHPYSD) are involved in subunit assembly. A helical transmembrane segment spans residues 97-117 (LIMLLLMVGNLIVLPVGITFF). The Extracellular segment spans residues 118-123 (KEENSP). A helical membrane pass occupies residues 124–144 (PWIVFNVLSDTFFLLDLVLNF). The Cytoplasmic segment spans residues 145 to 170 (RTGIVVEEGAEILLAPRAIRTRYLRT). Residues 171 to 191 (WFLVDLISSIPVDYIFLVVEL) form a helical membrane-spanning segment. At 192-200 (EPRLDAEVY) the chain is on the extracellular side. A helical; Voltage-sensor membrane pass occupies residues 201-221 (KTARALRIVRFTKILSLLRLL). The Cytoplasmic portion of the chain corresponds to 222–252 (RLSRLIRYMHQWEEIFHMTYDLASAVVRIFN). A helical membrane pass occupies residues 253 to 273 (LIGMMLLLCHWDGCLQFLVPM). Topologically, residues 274–296 (LQDFPSDCWVSMNRMVNHSWGRQ) are extracellular. N-linked (GlcNAc...) asparagine glycosylation occurs at N290. The pore-forming intramembrane region spans 297–318 (YSHALFKAMSHMLCIGYGQQAP). Residues 319–328 (VGMPDVWLTM) lie on the Extracellular side of the membrane. Residues 329–349 (LSMIVGATCYAMFIGHATALI) form a helical membrane-spanning segment. The Cytoplasmic segment spans residues 350–780 (QSLDSSRRQY…PRGPQISANM (431 aa)). Residues 353-780 (DSSRRQYQEK…PRGPQISANM (428 aa)) form an interaction with KCTD3 region. 3',5'-cyclic AMP-binding residues include G491, E492, C494, R501, T502, R542, and R545. Positions 549–569 (KNSILQRKRSEPSPGSSSGGV) are disordered. A Phosphoserine modification is found at S634. The span at 687–698 (ASLSRTGRSQVS) shows a compositional bias: polar residues. A disordered region spans residues 687 to 780 (ASLSRTGRSQ…PRGPQISANM (94 aa)).

Belongs to the potassium channel HCN family. As to quaternary structure, homotetramer. The potassium channel is composed of a homo- or heterotetrameric complex of pore-forming subunits. Interacts with HCN1. Interacts with KCTD3; this interaction increases cell surface expression and current density of this channel. Interacts with PEX5L.

It localises to the cell membrane. The enzyme catalyses K(+)(in) = K(+)(out). The catalysed reaction is Na(+)(in) = Na(+)(out). Its activity is regulated as follows. Inhibited by Cs(1+) and ivabradine. Unlike HCN2 and HCN4, HCN3 is insensitive to cyclic nucleotides, such as cAMP or cGMP. This lack of sensitivity of HCN3, despite harboring a functional cyclic nucleotide-binding domain (CNBD), may be explained by its shorter C-terminal sequence, which may alter the normal autoinhibition of the channel. Phosphatidylinositol-4,5-bisphosphate (PIP(2)) shifts HCN3 activation to more depolarized potentials and accelerated activation kinetics. Hyperpolarization-activated ion channel that are permeable to sodium and potassium ions, with an about 3:1 preference for potassium ions. Contributes to the native pacemaker currents in heart (If) and in neurons (Ih). In particular, plays a pivotal role in maintaining excitability and promoting rhythmic burst firing within hypothalamic nuclei. Exerts a significant influence on the configuration of the cardiac action potential waveform. Does not appear to play a prominent role in the processing of acute, neuropathic, or inflammatory pain. This chain is Potassium/sodium hyperpolarization-activated cyclic nucleotide-gated channel 3 (Hcn3), found in Rattus norvegicus (Rat).